We begin with the raw amino-acid sequence, 510 residues long: Leucine-rich repeat protein lrrA (510 aa).

LRR repeat units follow at residues 14–34, 35–59, 60–82, 84–106, 107–130, 132–152, 153–176, 177–200, 202–222, 224–245, 246–270, 272–292, 293–315, 316–340, 341–363, 365–386, 387–408, 410–432, 433–458, and 460–478; these read YRKREIVDLRKMNIDKLPPTI, GALQCKELLLSENDLITIPEEIGKL, SKVEIIDFAKNRINYIPPEIGSL, TLKQLFLSNNKLFYTPITPNIGA, LKNLTRLDLSSNQLDDLPVEISNC, ALEYLDISDNQLQSFPLEFGK, LYNLQVFNCSKNSLKSLPSEISGW, VKLEELNVSNNQLAFLPNQICLLG, LSTLNVGFNKLQQLPEELSSM, SLTNLDLKVNPPLQYVPQLSNL, RQLKILSIRNLQITHLPLGLGLLSE, IELDIRDNPQLKEIPYDIATL, INLQKLDLFGNNMRIVPREVGNL, INLQTLDLRQNKLTIDNIPSEIGKL, VNLKKLLLSNNLLIALPPEIASM, ALKEFEASNNQLQAIPTEIGEL, SGLTKINLSGNKLTSIPASFGN, SELQICDLKSNEIAELPTTLDGL, KSCTKIDLSHNMLTELPWEFGDLIGL, and ILDVGHNPLTIPPNPIVMK.

The protein localises to the cytoplasm. Its function is as follows. Involved in cytoskeleton remodeling, which is needed for normal chemotactic aggregation and efficient cell sorting during multicellular morphogenesis. The polypeptide is Leucine-rich repeat protein lrrA (lrrA) (Dictyostelium discoideum (Social amoeba)).